A 370-amino-acid chain; its full sequence is Anhydro-N-acetylmuramic acid kinase (370 aa).

Residue 13 to 20 coordinates ATP; it reads GTSMDGVD.

It belongs to the anhydro-N-acetylmuramic acid kinase family.

It catalyses the reaction 1,6-anhydro-N-acetyl-beta-muramate + ATP + H2O = N-acetyl-D-muramate 6-phosphate + ADP + H(+). It functions in the pathway amino-sugar metabolism; 1,6-anhydro-N-acetylmuramate degradation. Its pathway is cell wall biogenesis; peptidoglycan recycling. Catalyzes the specific phosphorylation of 1,6-anhydro-N-acetylmuramic acid (anhMurNAc) with the simultaneous cleavage of the 1,6-anhydro ring, generating MurNAc-6-P. Is required for the utilization of anhMurNAc either imported from the medium or derived from its own cell wall murein, and thus plays a role in cell wall recycling. The polypeptide is Anhydro-N-acetylmuramic acid kinase (Shewanella denitrificans (strain OS217 / ATCC BAA-1090 / DSM 15013)).